The following is a 625-amino-acid chain: Chaperone protein HtpG (625 aa).

The segment at 1–337 is a; substrate-binding; sequence MNIQKKEVYS…SNNLPLNVSR (337 aa). A b region spans residues 338-552; the sequence is EILQDNSITQ…SNEMSTQMAK (215 aa). The c stretch occupies residues 553 to 625; that stretch reads LFSAAGQSVP…ARTNKLILEQ (73 aa).

Belongs to the heat shock protein 90 family. As to quaternary structure, homodimer.

It localises to the cytoplasm. Its function is as follows. Molecular chaperone. Has ATPase activity. In Buchnera aphidicola subsp. Schizaphis graminum (strain Sg), this protein is Chaperone protein HtpG.